The sequence spans 785 residues: uncharacterized protein (785 aa).

The 129-residue stretch at 293–421 folds into the DOD-type homing endonuclease domain; the sequence is LVGYFLSEGY…LRLISLRLGF (129 aa).

In terms of processing, this protein undergoes a protein self splicing that involves a post-translational excision of the intervening region (intein) followed by peptide ligation.

This is an uncharacterized protein from Methanocaldococcus jannaschii (strain ATCC 43067 / DSM 2661 / JAL-1 / JCM 10045 / NBRC 100440) (Methanococcus jannaschii).